The chain runs to 478 residues: Kynureninase (478 aa).

Pyridoxal 5'-phosphate-binding positions include leucine 150, threonine 151, 178-181 (FPSD), serine 234, aspartate 263, histidine 266, and tyrosine 288. Position 289 is an N6-(pyridoxal phosphate)lysine (lysine 289). 2 residues coordinate pyridoxal 5'-phosphate: tryptophan 318 and asparagine 346.

It belongs to the kynureninase family. In terms of assembly, homodimer. Pyridoxal 5'-phosphate is required as a cofactor.

The protein localises to the cytoplasm. It catalyses the reaction L-kynurenine + H2O = anthranilate + L-alanine + H(+). The enzyme catalyses 3-hydroxy-L-kynurenine + H2O = 3-hydroxyanthranilate + L-alanine + H(+). The protein operates within amino-acid degradation; L-kynurenine degradation; L-alanine and anthranilate from L-kynurenine: step 1/1. Its pathway is cofactor biosynthesis; NAD(+) biosynthesis; quinolinate from L-kynurenine: step 2/3. Its function is as follows. Catalyzes the cleavage of L-kynurenine (L-Kyn) and L-3-hydroxykynurenine (L-3OHKyn) into anthranilic acid (AA) and 3-hydroxyanthranilic acid (3-OHAA), respectively. The sequence is that of Kynureninase from Caenorhabditis elegans.